Reading from the N-terminus, the 202-residue chain is Nuclear transcription factor Y subunit C-6 (202 aa).

Positions 1-16 are enriched in low complexity; sequence MAENNNNNGDNMNNDN. Disordered stretches follow at residues 1-29 and 180-202; these read MAEN…LPPM and AWPA…GGGN. Over residues 17–29 the composition is skewed to polar residues; that stretch reads HQQPPSYSQLPPM.

It belongs to the NFYC/HAP5 subunit family. Heterotrimeric transcription factor composed of three components, NF-YA, NF-YB and NF-YC. NF-YB and NF-YC must interact and dimerize for NF-YA association and DNA binding. As to expression, expressed in flowers and siliques.

It is found in the nucleus. Functionally, stimulates the transcription of various genes by recognizing and binding to a CCAAT motif in promoters. The protein is Nuclear transcription factor Y subunit C-6 (NFYC6) of Arabidopsis thaliana (Mouse-ear cress).